A 301-amino-acid polypeptide reads, in one-letter code: Glycine--tRNA ligase alpha subunit (301 aa).

The protein belongs to the class-II aminoacyl-tRNA synthetase family. Tetramer of two alpha and two beta subunits.

It is found in the cytoplasm. It catalyses the reaction tRNA(Gly) + glycine + ATP = glycyl-tRNA(Gly) + AMP + diphosphate. The polypeptide is Glycine--tRNA ligase alpha subunit (Variovorax paradoxus (strain S110)).